Consider the following 500-residue polypeptide: Glutathione reductase (500 aa).

FAD is bound by residues S12 and G13. Residue S12 coordinates glutathione. R19 lines the glutathione pocket. FAD-binding residues include E32, T39, C40, and K48. An intrachain disulfide couples C40 to C45. Y95 contacts glutathione. A111 contributes to the FAD binding site. NADP(+)-binding residues include I187, E190, R207, R213, and G272. 2 residues coordinate FAD: D312 and T354. Glutathione is bound at residue R362. V384 contributes to the NADP(+) binding site. H485 contacts FAD. H485 (proton acceptor) is an active-site residue.

It belongs to the class-I pyridine nucleotide-disulfide oxidoreductase family. Homodimer. It depends on FAD as a cofactor.

The protein localises to the cytoplasm. The enzyme catalyses 2 glutathione + NADP(+) = glutathione disulfide + NADPH + H(+). Functionally, catalyzes the reduction of glutathione disulfide (GSSG) to reduced glutathione (GSH). Constitutes the major mechanism to maintain a high GSH:GSSG ratio in the cytosol. The sequence is that of Glutathione reductase from Plasmodium falciparum (isolate K1 / Thailand).